Here is an 890-residue protein sequence, read N- to C-terminus: DNA mismatch repair protein MutS (890 aa).

An ATP-binding site is contributed by 607–614 (GPNMSGKS). Positions 832–851 (ESQLSFFGTEQSSKKQDKPV) are disordered.

The protein belongs to the DNA mismatch repair MutS family.

Functionally, this protein is involved in the repair of mismatches in DNA. It is possible that it carries out the mismatch recognition step. This protein has a weak ATPase activity. The polypeptide is DNA mismatch repair protein MutS (Bacillus cereus (strain 03BB102)).